The following is a 390-amino-acid chain: Dual-specificity RNA methyltransferase RlmN (390 aa).

Catalysis depends on E111, which acts as the Proton acceptor. Residues 117–356 (EDDRATLCVS…VIVRKTRGDD (240 aa)) form the Radical SAM core domain. C124 and C361 are joined by a disulfide. C131, C135, and C138 together coordinate [4Fe-4S] cluster. Residues 185–186 (GE), S217, 239–241 (SLH), and N318 each bind S-adenosyl-L-methionine. C361 acts as the S-methylcysteine intermediate in catalysis.

This sequence belongs to the radical SAM superfamily. RlmN family. The cofactor is [4Fe-4S] cluster.

Its subcellular location is the cytoplasm. The enzyme catalyses adenosine(2503) in 23S rRNA + 2 reduced [2Fe-2S]-[ferredoxin] + 2 S-adenosyl-L-methionine = 2-methyladenosine(2503) in 23S rRNA + 5'-deoxyadenosine + L-methionine + 2 oxidized [2Fe-2S]-[ferredoxin] + S-adenosyl-L-homocysteine. It carries out the reaction adenosine(37) in tRNA + 2 reduced [2Fe-2S]-[ferredoxin] + 2 S-adenosyl-L-methionine = 2-methyladenosine(37) in tRNA + 5'-deoxyadenosine + L-methionine + 2 oxidized [2Fe-2S]-[ferredoxin] + S-adenosyl-L-homocysteine. Functionally, specifically methylates position 2 of adenine 2503 in 23S rRNA and position 2 of adenine 37 in tRNAs. m2A2503 modification seems to play a crucial role in the proofreading step occurring at the peptidyl transferase center and thus would serve to optimize ribosomal fidelity. This chain is Dual-specificity RNA methyltransferase RlmN, found in Edwardsiella ictaluri (strain 93-146).